Consider the following 851-residue polypeptide: Putative serine/threonine-protein kinase 019R (851 aa).

5 disordered regions span residues 1–24 (MATN…RTIK), 61–91 (PRVA…RGGP), 104–160 (GGAS…KRGG), 190–216 (GLSP…ARRS), and 340–400 (SRPS…GEPR). Over residues 125–141 (ARRQSPAEAAEASPCPE) the composition is skewed to low complexity. Residues 196-216 (SHMRKSPARRSPARRSPARRS) are compositionally biased toward basic residues. A compositionally biased stretch (low complexity) spans 340 to 366 (SRPSGVSRTSGTSGSSGSSASSRPPNS). Residues 456–851 (AVSDNVIGQG…GEREIESFTM (396 aa)) enclose the Protein kinase domain. ATP contacts are provided by residues 462–470 (IGQGSWGSV) and Lys-485. Asp-608 functions as the Proton acceptor in the catalytic mechanism.

Belongs to the protein kinase superfamily. Ser/Thr protein kinase family.

It catalyses the reaction L-seryl-[protein] + ATP = O-phospho-L-seryl-[protein] + ADP + H(+). The enzyme catalyses L-threonyl-[protein] + ATP = O-phospho-L-threonyl-[protein] + ADP + H(+). This is Putative serine/threonine-protein kinase 019R from Dryophytes versicolor (chameleon treefrog).